Here is a 331-residue protein sequence, read N- to C-terminus: Ornithine carbamoyltransferase (331 aa).

Carbamoyl phosphate is bound by residues 55–58 (STRT), Gln-82, Arg-106, and 133–136 (HPTQ). Residues Asn-166, Asp-230, and 234–235 (SM) each bind L-ornithine. Carbamoyl phosphate is bound by residues 272-273 (CL) and Arg-317.

This sequence belongs to the aspartate/ornithine carbamoyltransferase superfamily. OTCase family.

It localises to the cytoplasm. The catalysed reaction is carbamoyl phosphate + L-ornithine = L-citrulline + phosphate + H(+). It functions in the pathway amino-acid biosynthesis; L-arginine biosynthesis; L-arginine from L-ornithine and carbamoyl phosphate: step 1/3. In terms of biological role, reversibly catalyzes the transfer of the carbamoyl group from carbamoyl phosphate (CP) to the N(epsilon) atom of ornithine (ORN) to produce L-citrulline. The chain is Ornithine carbamoyltransferase (argF) from Neisseria meningitidis serogroup B (strain ATCC BAA-335 / MC58).